A 263-amino-acid polypeptide reads, in one-letter code: Histidine racemase (263 aa).

Cysteine 67 functions as the Proton acceptor in the catalytic mechanism. The active-site Proton donor is the cysteine 209.

It belongs to the histidine racemase family. As to quaternary structure, homodimer.

It carries out the reaction L-histidine = D-histidine. Its function is as follows. Cofactor-independent isomerase that catalyzes the reversible conversion of L-histidine to D-histidine. May play a role in growth of F.nucleatum. The protein is Histidine racemase of Fusobacterium nucleatum subsp. nucleatum (strain ATCC 23726 / VPI 4351).